Consider the following 740-residue polypeptide: Catalase-peroxidase (740 aa).

Positions 1 to 14 are enriched in basic and acidic residues; that stretch reads MTENHDAIVTDAKS. The interval 1-21 is disordered; sequence MTENHDAIVTDAKSEGSGGCP. The tryptophyl-tyrosyl-methioninium (Trp-Tyr) (with M-257) cross-link spans 108–231; it reads WHSAGTYRIS…LGAVQMGLIY (124 aa). The active-site Proton acceptor is the His109. Positions 231–257 form a cross-link, tryptophyl-tyrosyl-methioninium (Tyr-Met) (with W-108); it reads YVNPEGPNGNPDPIAAARDIRETFRRM. Heme b is bound at residue His272.

The protein belongs to the peroxidase family. Peroxidase/catalase subfamily. In terms of assembly, homodimer. Heme b is required as a cofactor. Formation of the three residue Trp-Tyr-Met cross-link is important for the catalase, but not the peroxidase activity of the enzyme.

The enzyme catalyses H2O2 + AH2 = A + 2 H2O. The catalysed reaction is 2 H2O2 = O2 + 2 H2O. Bifunctional enzyme with both catalase and broad-spectrum peroxidase activity. This Streptomyces reticuli protein is Catalase-peroxidase.